The primary structure comprises 350 residues: Phosphoribosylformylglycinamidine cyclo-ligase (350 aa).

Belongs to the AIR synthase family.

The protein localises to the cytoplasm. It catalyses the reaction 2-formamido-N(1)-(5-O-phospho-beta-D-ribosyl)acetamidine + ATP = 5-amino-1-(5-phospho-beta-D-ribosyl)imidazole + ADP + phosphate + H(+). Its pathway is purine metabolism; IMP biosynthesis via de novo pathway; 5-amino-1-(5-phospho-D-ribosyl)imidazole from N(2)-formyl-N(1)-(5-phospho-D-ribosyl)glycinamide: step 2/2. This Nitratidesulfovibrio vulgaris (strain DSM 19637 / Miyazaki F) (Desulfovibrio vulgaris) protein is Phosphoribosylformylglycinamidine cyclo-ligase.